A 62-amino-acid chain; its full sequence is Large ribosomal subunit protein eL24 (62 aa).

Cysteine 7, cysteine 10, cysteine 33, and cysteine 37 together coordinate Zn(2+). The C4-type zinc finger occupies 7–37 (CDYCGDDIEPGTGTMFVHNDGSTVHFCSAKC).

This sequence belongs to the eukaryotic ribosomal protein eL24 family. In terms of assembly, part of the 50S ribosomal subunit. Forms a cluster with proteins L3 and L14. Zn(2+) serves as cofactor.

In terms of biological role, binds to the 23S rRNA. This Halobacterium salinarum (strain ATCC 29341 / DSM 671 / R1) protein is Large ribosomal subunit protein eL24.